Reading from the N-terminus, the 129-residue chain is UPF0325 protein ECA1027 (129 aa).

The protein belongs to the UPF0325 family.

This Pectobacterium atrosepticum (strain SCRI 1043 / ATCC BAA-672) (Erwinia carotovora subsp. atroseptica) protein is UPF0325 protein ECA1027.